The chain runs to 379 residues: Mating-type protein MAT-1 (379 aa).

Residues 60–117 (RARKALNAFVRFRCYYVAIPMFKQWPMKKLSNLIGLLWEADPNKSLWSLMTKAWSTIR) constitute a DNA-binding region (alpha box).

Belongs to the MATALPHA1 family.

Its subcellular location is the nucleus. Its function is as follows. Mating type proteins are sequence specific DNA-binding proteins that act as master switches in fungal differentiation by controlling gene expression in a cell type-specific fashion. Transcriptional activator that induces the transcription of alpha-specific genes. The sequence is that of Mating-type protein MAT-1 (MAT1) from Curvularia kusanoi (Cochliobolus kusanoi).